Reading from the N-terminus, the 270-residue chain is Hemin import ATP-binding protein HmuV (270 aa).

In terms of domain architecture, ABC transporter spans 5-242 (LEAEAATYSV…SLINRVFDIE (238 aa)). 37 to 44 (GPNGAGKS) is an ATP binding site.

Belongs to the ABC transporter superfamily. Heme (hemin) importer (TC 3.A.1.14.5) family. In terms of assembly, the complex is composed of two ATP-binding proteins (HmuV), two transmembrane proteins (HmuU) and a solute-binding protein (HmuT).

Its subcellular location is the cell inner membrane. In terms of biological role, part of the ABC transporter complex HmuTUV involved in hemin import. Responsible for energy coupling to the transport system. The protein is Hemin import ATP-binding protein HmuV of Rhodopseudomonas palustris (strain BisA53).